The primary structure comprises 654 residues: Collagen alpha-1(XXV) chain (654 aa).

Residues 1 to 26 (MLLKKHAGKGGGREPRSEDPTPAEQH) are disordered. The Cytoplasmic portion of the chain corresponds to 1 to 33 (MLLKKHAGKGGGREPRSEDPTPAEQHCARTMPP). The helical; Signal-anchor for type II membrane protein transmembrane segment at 34 to 54 (CAVLAALLSVVAVVSCLYLGV) threads the bilayer. The Extracellular segment spans residues 55–654 (KTNDLQARIA…GLPMPGCWQK (600 aa)). At glutamate 113 the chain carries Pyrrolidone carboxylic acid (Glu). The tract at residues 116 to 168 (SECNCPAGPPGKRGKRGRRGESGPPGQPGPQGPPGPKGDKGEQGDQGPRMVFP) is disordered. Residues 121–164 (PAGPPGKRGKRGRRGESGPPGQPGPQGPPGPKGDKGEQGDQGPR) form the Collagen-like 1 domain. Residues 140-151 (PGQPGPQGPPGP) are compositionally biased toward pro residues. The interaction with amyloid-beta peptide stretch occupies residues 181–188 (LIKRRLIK). Disordered regions lie at residues 189 to 426 (GDQG…QGAT) and 445 to 654 (LTVT…CWQK). Collagen-like domains lie at 192–247 (GQAG…QKGS), 249–308 (GAPG…PGSS), 311–370 (GIKG…AGPP), 372–425 (RGER…DQGA), and 447–505 (VTGP…PGLP). The segment covering 196–208 (PPGPPGPPGPRGP) has biased composition (pro residues). The span at 230–245 (PGEQGLMGPLGPPGQK) shows a compositional bias: low complexity. Residues 280–290 (EPGEQGEKGDA) are compositionally biased toward basic and acidic residues. Residues 336-358 (LPGIKGEPGFIGPQGEPGLPGLP) show a composition bias toward low complexity. Composition is skewed to basic and acidic residues over residues 361–377 (KGER…ERGE) and 398–407 (SKGDRGEKGD). A compositionally biased stretch (low complexity) spans 457 to 466 (QGLQGPKGEQ). Residues 494 to 503 (GEKGGIGLPG) are compositionally biased toward gly residues. The segment covering 517–527 (SGMPGPQGPSI) has biased composition (low complexity). Pro residues predominate over residues 528 to 543 (IGPPGPPGPHGPPGPM). Residues 571–630 (GEKGAMGEPGPRGPYGLPGKDGEPGLDGFPGPRGEKGDLGEKGEKGFRGVKGEKGEPGQP) enclose the Collagen-like 7 domain. Basic and acidic residues predominate over residues 603–626 (RGEKGDLGEKGEKGFRGVKGEKGE).

Forms homodimers and homotrimers. Binds to the fibrillized forms of amyloid-beta protein 40 (beta-APP40) and amyloid-beta protein 42 (beta-APP42). Found associated with beta-APP42 more frequently than with beta-APP40. Undergoes proteolytic cleavage by furin protease to yield the soluble collagen-like Alzheimer amyloid plaque component. Post-translationally, glycosylated. In terms of processing, hydroxylated on 11% of proline residues and 49% of lysine residues. Expressed predominantly in brain. Deposited preferentially in primitive or neuritic amyloid plaques which are typical of Alzheimer disease.

Its subcellular location is the membrane. Its function is as follows. Inhibits fibrillization of amyloid-beta peptide during the elongation phase. Has also been shown to assemble amyloid fibrils into protease-resistant aggregates. Binds heparin. This Homo sapiens (Human) protein is Collagen alpha-1(XXV) chain.